The sequence spans 451 residues: Gamma-aminobutyric acid receptor subunit alpha-2 (451 aa).

An N-terminal signal peptide occupies residues 1-28; it reads MKTKLNIYNMQFLLFVFLVWDPARLVLA. The Extracellular segment spans residues 29-249; sequence NIQEDEAKNN…MTAHFHLKRK (221 aa). N-linked (GlcNAc...) asparagine glycosylation occurs at asparagine 38. Residue arginine 94 participates in 4-aminobutanoate binding. N-linked (GlcNAc...) asparagine glycosylation is present at asparagine 138. A 4-aminobutanoate-binding site is contributed by threonine 157. Cysteines 166 and 180 form a disulfide. A helical transmembrane segment spans residues 250 to 270; sequence IGYFVIQTYLPCIMTVILSQV. Residues 271–280 lie on the Cytoplasmic side of the membrane; sequence SFWLNRESVP. The chain crosses the membrane as a helical span at residues 281–300; that stretch reads ARTVFGVTTVLTMTTLSISA. Over 301-311 the chain is Extracellular; the sequence is RNSLPKVAYAT. A helical transmembrane segment spans residues 312–332; that stretch reads AMDWFIAVCYAFVFSALIEFA. Topologically, residues 333–420 are cytoplasmic; that stretch reads TVNYFTKRGW…FNSVSKIDRM (88 aa). Residues 421–441 form a helical membrane-spanning segment; the sequence is SRIVFPVLFGTFNLVYWATYL. Residues 442–451 are Extracellular-facing; that stretch reads NREPVLGVSP.

Belongs to the ligand-gated ion channel (TC 1.A.9) family. Gamma-aminobutyric acid receptor (TC 1.A.9.5) subfamily. GABRA2 sub-subfamily. As to quaternary structure, heteropentamer, formed by a combination of alpha (GABRA1-6), beta (GABRB1-3), gamma (GABRG1-3), delta (GABRD), epsilon (GABRE), rho (GABRR1-3), pi (GABRP) and theta (GABRQ) subunits, each subunit exhibiting distinct physiological and pharmacological properties. Interacts with UBQLN1. Interacts with KIF21B. Interacts with LHFPL4. Interacts with SHISA7; interaction leads to the regulation of GABA(A) receptor trafficking, channel deactivation kinetics and pharmacology. Post-translationally, glycosylated.

Its subcellular location is the postsynaptic cell membrane. The protein resides in the cell membrane. It localises to the cytoplasmic vesicle membrane. It is found in the cell projection. The protein localises to the dendrite. It carries out the reaction chloride(in) = chloride(out). Its activity is regulated as follows. Activated by pentobarbital. Inhibited by the antagonist bicuculline. Functionally, alpha subunit of the heteropentameric ligand-gated chloride channel gated by gamma-aminobutyric acid (GABA), a major inhibitory neurotransmitter in the brain. GABA-gated chloride channels, also named GABA(A) receptors (GABAAR), consist of five subunits arranged around a central pore and contain GABA active binding site(s) located at the alpha and beta subunit interfaces. When activated by GABA, GABAARs selectively allow the flow of chloride anions across the cell membrane down their electrochemical gradient. Chloride influx into the postsynaptic neuron following GABAAR opening decreases the neuron ability to generate a new action potential, thereby reducing nerve transmission. The alpha-2 subunit exhibits synaptogenic activity together with beta-2 and very little to no activity together with beta-3, the gamma-2 subunit being necessary but not sufficient to induce rapid synaptic contacts formation. This Homo sapiens (Human) protein is Gamma-aminobutyric acid receptor subunit alpha-2.